Reading from the N-terminus, the 83-residue chain is Sulfur carrier protein TusA (83 aa).

Cys-20 serves as the catalytic Cysteine persulfide intermediate.

This sequence belongs to the sulfur carrier protein TusA family.

It is found in the cytoplasm. Functionally, sulfur carrier protein which probably makes part of a sulfur-relay system. The chain is Sulfur carrier protein TusA from Pseudoalteromonas atlantica (strain T6c / ATCC BAA-1087).